The following is a 114-amino-acid chain: Replication initiation control protein YabA (114 aa).

Zn(2+) is bound by residues histidine 79, cysteine 81, cysteine 95, and cysteine 98.

This sequence belongs to the YabA family. Homotetramer. Interacts with both DnaA and DnaN, acting as a bridge between these two proteins. It depends on Zn(2+) as a cofactor.

The protein localises to the cytoplasm. It localises to the nucleoid. Its function is as follows. Involved in control of chromosome replication initiation. Inhibits the cooperative binding of DnaA to the oriC region, thus negatively regulating initiation of chromosome replication. Inhibits the ability of DnaA-ATP to form a helix on DNA; does not disassemble preformed DnaA-DNA helices. Decreases the residence time of DnaA on the chromosome at its binding sites (oriC, replication forks and promoter-binding sites). Tethers DnaA to the replication machinery via the DNA polymerase beta sliding clamp subunit (dnaN). Associates with oriC and other DnaA targets on the chromosome in a DnaA-dependent manner. The chain is Replication initiation control protein YabA from Lactobacillus gasseri (strain ATCC 33323 / DSM 20243 / BCRC 14619 / CIP 102991 / JCM 1131 / KCTC 3163 / NCIMB 11718 / NCTC 13722 / AM63).